Reading from the N-terminus, the 462-residue chain is UDP-N-acetylmuramate--L-alanine ligase (462 aa).

ATP is bound at residue 117-123 (GTHGKTT).

This sequence belongs to the MurCDEF family.

It is found in the cytoplasm. It carries out the reaction UDP-N-acetyl-alpha-D-muramate + L-alanine + ATP = UDP-N-acetyl-alpha-D-muramoyl-L-alanine + ADP + phosphate + H(+). It participates in cell wall biogenesis; peptidoglycan biosynthesis. Cell wall formation. The protein is UDP-N-acetylmuramate--L-alanine ligase of Streptomyces coelicolor (strain ATCC BAA-471 / A3(2) / M145).